The sequence spans 2209 residues: Genome polyprotein (2209 aa).

G2 is lipidated: N-myristoyl glycine; by host. The Cytoplasmic segment spans residues 2–1520 (GAQVSSQKVG…NINRAMTILQ (1519 aa)). The interval 580–600 (GLGQMLESMIDNTVRETVGAA) is amphipathic alpha-helix. Active-site for protease 2A activity residues include H901 and D919. 2 residues coordinate Zn(2+): C936 and C938. C990 (for protease 2A activity) is an active-site residue. Zn(2+) contacts are provided by C996 and H998. The tract at residues 1128–1200 (GDSWLKKFTE…HQSCPSQEHQ (73 aa)) is membrane-binding. The segment at 1128–1266 (GDSWLKKFTE…SPGTGKSVAT (139 aa)) is oligomerization. The interval 1149 to 1153 (SNKIS) is RNA-binding. The region spanning 1232 to 1388 (EHTINNYIQF…NEYSRDGKLN (157 aa)) is the SF3 helicase domain. 1256 to 1263 (GSPGTGKS) contacts ATP. Residues C1396, C1399, C1408, and C1413 each coordinate Zn(2+). The segment at 1396–1413 (CKNCHQPANFKRCCPLVC) adopts a C4-type zinc-finger fold. The interval 1440 to 1447 (ERNRRSNI) is RNA-binding. Residues 1451 to 1456 (MEALFQ) form an oligomerization region. The stretch at 1521–1536 (AVTTFAAVAGVVYVMY) is an intramembrane region. At 1537-2209 (KLFAGHQGAY…TLYRRWLDSF (673 aa)) the chain is on the cytoplasmic side. Y1546 carries the post-translational modification O-(5'-phospho-RNA)-tyrosine. Residues 1566–1744 (GPGFDYAVAM…FAAALKRSYF (179 aa)) form the Peptidase C3 domain. Catalysis depends on for protease 3C activity residues H1605, E1636, and C1712. A RdRp catalytic domain is found at 1975–2090 (EKLFAFDYTG…SYPHEVDASL (116 aa)). Positions 1981 and 2076 each coordinate Mg(2+).

Belongs to the picornaviruses polyprotein family. Interacts with capsid protein VP1 and capsid protein VP3 to form heterotrimeric protomers. As to quaternary structure, interacts with capsid protein VP0, and capsid protein VP3 to form heterotrimeric protomers. Interacts with human PVR. Five protomers subsequently associate to form pentamers which serve as building blocks for the capsid. Interacts with capsid protein VP2, capsid protein VP3 and capsid protein VP4 following cleavage of capsid protein VP0. In terms of assembly, interacts with capsid protein VP1 and capsid protein VP3 in the mature capsid. Interacts with capsid protein VP0 and capsid protein VP1 to form heterotrimeric protomers. Five protomers subsequently associate to form pentamers which serve as building blocks for the capsid. Interacts with capsid protein VP4 in the mature capsid. Interacts with protein 2C; this interaction may be important for virion morphogenesis. As to quaternary structure, interacts with capsid protein VP1 and capsid protein VP3. In terms of assembly, homodimer. Homohexamer; forms a hexameric ring structure with 6-fold symmetry characteristic of AAA+ ATPases. Interacts (via N-terminus) with host RTN3 (via reticulon domain); this interaction is important for viral replication. Interacts with capsid protein VP3; this interaction may be important for virion morphogenesis. As to quaternary structure, interacts with protein 3CD. In terms of assembly, homodimer. Interacts with host GBF1. Interacts (via GOLD domain) with host ACBD3 (via GOLD domain); this interaction allows the formation of a viral protein 3A/ACBD3 heterotetramer with a 2:2 stoichiometry, which will stimulate the recruitment of host PI4KB in order to synthesize PI4P at the viral RNA replication sites. Interacts with RNA-directed RNA polymerase. As to quaternary structure, interacts with protein 3AB and with RNA-directed RNA polymerase. In terms of assembly, interacts with Viral protein genome-linked and with protein 3CD. Mg(2+) is required as a cofactor. Specific enzymatic cleavages in vivo by the viral proteases yield processing intermediates and the mature proteins. In terms of processing, myristoylation is required for the formation of pentamers during virus assembly. Further assembly of 12 pentamers and a molecule of genomic RNA generates the provirion. Post-translationally, during virion maturation, immature virions are rendered infectious following cleavage of VP0 into VP4 and VP2. This maturation seems to be an autocatalytic event triggered by the presence of RNA in the capsid and it is followed by a conformational change infectious virion. Myristoylation is required during RNA encapsidation and formation of the mature virus particle. In terms of processing, VPg is uridylylated by the polymerase into VPg-pUpU. This acts as a nucleotide-peptide primer for the genomic RNA replication.

The protein localises to the virion. It is found in the host cytoplasm. It localises to the host cytoplasmic vesicle membrane. The protein resides in the host nucleus. The enzyme catalyses a ribonucleoside 5'-triphosphate + H2O = a ribonucleoside 5'-diphosphate + phosphate + H(+). It carries out the reaction Selective cleavage of Tyr-|-Gly bond in the picornavirus polyprotein.. It catalyses the reaction RNA(n) + a ribonucleoside 5'-triphosphate = RNA(n+1) + diphosphate. The catalysed reaction is Selective cleavage of Gln-|-Gly bond in the poliovirus polyprotein. In other picornavirus reactions Glu may be substituted for Gln, and Ser or Thr for Gly.. Its activity is regulated as follows. Replication or transcription is subject to high level of random mutations by the nucleotide analog ribavirin. Functionally, forms an icosahedral capsid of pseudo T=3 symmetry with capsid proteins VP2 and VP3. The capsid is 300 Angstroms in diameter, composed of 60 copies of each capsid protein and enclosing the viral positive strand RNA genome. Capsid protein VP1 mainly forms the vertices of the capsid. Capsid protein VP1 interacts with host cell receptor PVR to provide virion attachment to target host cells. This attachment induces virion internalization predominantly through clathrin- and caveolin-independent endocytosis in Hela cells and through caveolin-mediated endocytosis in brain microvascular endothelial cells. Tyrosine kinases are probably involved in the entry process. Virus binding to PVR induces increased junctional permeability and rearrangement of junctional proteins. Modulation of endothelial tight junctions, as well as cytolytic infection of endothelial cells themselves, may result in loss of endothelial integrity which may help the virus to reach the CNS. After binding to its receptor, the capsid undergoes conformational changes. Capsid protein VP1 N-terminus (that contains an amphipathic alpha-helix) and capsid protein VP4 are externalized. Together, they shape a pore in the host membrane through which viral genome is translocated to host cell cytoplasm. In terms of biological role, forms an icosahedral capsid of pseudo T=3 symmetry with capsid proteins VP2 and VP3. The capsid is 300 Angstroms in diameter, composed of 60 copies of each capsid protein and enclosing the viral positive strand RNA genome. Lies on the inner surface of the capsid shell. After binding to the host receptor, the capsid undergoes conformational changes. Capsid protein VP4 is released, Capsid protein VP1 N-terminus is externalized, and together, they shape a pore in the host membrane through which the viral genome is translocated into the host cell cytoplasm. Its function is as follows. Component of immature procapsids, which is cleaved into capsid proteins VP4 and VP2 after maturation. Allows the capsid to remain inactive before the maturation step. Functionally, cysteine protease that cleaves viral polyprotein and specific host proteins. It is responsible for the autocatalytic cleavage between the P1 and P2 regions, which is the first cleavage occurring in the polyprotein. Also cleaves the host translation initiation factor EIF4G1, in order to shut down the capped cellular mRNA translation. Inhibits the host nucleus-cytoplasm protein and RNA trafficking by cleaving host members of the nuclear pores including NUP98, NUP62 and NUP153. Counteracts stress granule formation probably by antagonizing its assembly or promoting its dissassembly. Cleaves and inhibits host IFIH1/MDA5, thereby inhibiting the type-I IFN production and the establishment of the antiviral state. Cleaves and inhibits host MAVS, thereby inhibiting the type-I IFN production and the establishment of the antiviral state. In terms of biological role, plays an essential role in the virus replication cycle by acting as a viroporin. Creates a pore in the host endoplasmic reticulum and as a consequence releases Ca2+ in the cytoplasm of infected cell. In turn, high levels of cytoplasmic calcium may trigger membrane trafficking and transport of viral ER-associated proteins to viroplasms, sites of viral genome replication. Induces and associates with structural rearrangements of intracellular membranes. Displays RNA-binding, nucleotide binding and NTPase activities. May play a role in virion morphogenesis and viral RNA encapsidation by interacting with the capsid protein VP3. Its function is as follows. Localizes the viral replication complex to the surface of membranous vesicles. Together with protein 3CD binds the Cis-Active RNA Element (CRE) which is involved in RNA synthesis initiation. Acts as a cofactor to stimulate the activity of 3D polymerase, maybe through a nucleid acid chaperone activity. Functionally, localizes the viral replication complex to the surface of membranous vesicles. It inhibits host cell endoplasmic reticulum-to-Golgi apparatus transport and causes the disassembly of the Golgi complex, possibly through GBF1 interaction. This would result in depletion of MHC, trail receptors and IFN receptors at the host cell surface. Plays an essential role in viral RNA replication by recruiting ACBD3 and PI4KB at the viral replication sites, thereby allowing the formation of the rearranged membranous structures where viral replication takes place. In terms of biological role, acts as a primer for viral RNA replication and remains covalently bound to viral genomic RNA. VPg is uridylylated prior to priming replication into VPg-pUpU. The oriI viral genomic sequence may act as a template for this. The VPg-pUpU is then used as primer on the genomic RNA poly(A) by the RNA-dependent RNA polymerase to replicate the viral genome. During genome replication, the VPg-RNA linkage is removed by the host TDP2, thereby accelerating replication. During the late stage of the replication cycle, host TDP2 is excluded from sites of viral RNA synthesis and encapsidation, allowing for the generation of progeny virions. Involved in the viral replication complex and viral polypeptide maturation. It exhibits protease activity with a specificity and catalytic efficiency that is different from protease 3C. Protein 3CD lacks polymerase activity. Protein 3CD binds to the 5'UTR of the viral genome. Its function is as follows. Major viral protease that mediates proteolytic processing of the polyprotein. Cleaves host EIF5B, contributing to host translation shutoff. Also cleaves host PABPC1, contributing to host translation shutoff. Cleaves host RIGI and thus contributes to the inhibition of type I interferon production. Cleaves host NLRP1, triggers host N-glycine-mediated degradation of the autoinhibitory NLRP1 N-terminal fragment. Inhibits the integrated stress response (ISR) in the infected cell by cleaving host G3BP1. Stress granule formation is thus inhibited, which allows protein synthesis and viral replication. Functionally, replicates the viral genomic RNA on the surface of intracellular membranes. May form linear arrays of subunits that propagate along a strong head-to-tail interaction called interface-I. Covalently attaches UMP to a tyrosine of VPg, which is used to prime RNA synthesis. The positive stranded RNA genome is first replicated at virus induced membranous vesicles, creating a dsRNA genomic replication form. This dsRNA is then used as template to synthesize positive stranded RNA genomes. ss(+)RNA genomes are either translated, replicated or encapsidated. In Homo sapiens (Human), this protein is Genome polyprotein.